The sequence spans 143 residues: Peptide methionine sulfoxide reductase MsrB (143 aa).

Residues 16 to 139 form the MsrB domain; that stretch reads DAELRRRLTP…NSAALNFESR (124 aa). Residues C55, C58, C104, and C107 each coordinate Zn(2+). Catalysis depends on C128, which acts as the Nucleophile.

It belongs to the MsrB Met sulfoxide reductase family. Zn(2+) is required as a cofactor.

The catalysed reaction is L-methionyl-[protein] + [thioredoxin]-disulfide + H2O = L-methionyl-(R)-S-oxide-[protein] + [thioredoxin]-dithiol. This is Peptide methionine sulfoxide reductase MsrB from Burkholderia multivorans (strain ATCC 17616 / 249).